The chain runs to 979 residues: Protein argonaute PNH1 (979 aa).

A disordered region spans residues 1–95 (MLEVLDMAPP…GGRAGAGPGP (95 aa)). Over residues 54-67 (AETAAATAAVAPPE) the composition is skewed to low complexity. Over residues 77–86 (GRRRGGRGRG) the composition is skewed to basic residues. Positions 333-446 (PVIEFVAQIL…LPMEACKIVE (114 aa)) constitute a PAZ domain. Residues 620–941 (LLLAILPDNN…AAFRARFYME (322 aa)) enclose the Piwi domain.

It belongs to the argonaute family. Ago subfamily.

It is found in the cytoplasm. In terms of biological role, probably involved in the RNA silencing pathway. May bind to short RNAs such as microRNAs (miRNAs) or short interfering RNAs (siRNAs), and represses the translation of mRNAs which are complementary to them. Plays a role in the maintenance of the indeterminate state of the stem cells in the shoot apical meristem (SAM). Regulates leaf formation through vascular development and may be involved in determining the central domain of the leaf founder region. In Oryza sativa subsp. japonica (Rice), this protein is Protein argonaute PNH1 (PHN1).